Reading from the N-terminus, the 120-residue chain is Large ribosomal subunit protein uL18 (120 aa).

This sequence belongs to the universal ribosomal protein uL18 family. In terms of assembly, part of the 50S ribosomal subunit; part of the 5S rRNA/L5/L18/L25 subcomplex. Contacts the 5S and 23S rRNAs.

Functionally, this is one of the proteins that bind and probably mediate the attachment of the 5S RNA into the large ribosomal subunit, where it forms part of the central protuberance. This is Large ribosomal subunit protein uL18 from Nitrobacter winogradskyi (strain ATCC 25391 / DSM 10237 / CIP 104748 / NCIMB 11846 / Nb-255).